Here is a 227-residue protein sequence, read N- to C-terminus: DNA repair protein RecO (227 aa).

Belongs to the RecO family.

Functionally, involved in DNA repair and RecF pathway recombination. In Pseudomonas putida (strain W619), this protein is DNA repair protein RecO.